A 338-amino-acid chain; its full sequence is Citramalyl-CoA lyase, mitochondrial (338 aa).

The N-terminal 20 residues, 1–20 (MALCVLRNTVRGAAALPRLK), are a transit peptide targeting the mitochondrion. Tyr-48, Lys-55, and Lys-59 together coordinate substrate. 3 positions are modified to N6-acetyllysine: Lys-55, Lys-59, and Lys-64. An N6-acetyllysine; alternate mark is found at Lys-80 and Lys-90. An N6-succinyllysine; alternate mark is found at Lys-80 and Lys-90. Arg-105 lines the substrate pocket. Positions 169 and 204 each coordinate Mg(2+). 270 to 271 (IH) provides a ligand contact to substrate. An N6-succinyllysine modification is found at Lys-307. Asp-318 is a catalytic residue.

The protein belongs to the HpcH/HpaI aldolase family. Citrate lyase beta subunit-like subfamily. Homotrimer. The cofactor is Mg(2+). As to expression, detected in brown fat, brain, liver, kidney, heart, skeletal muscle and ovary (at protein level).

It is found in the mitochondrion. The enzyme catalyses glyoxylate + acetyl-CoA + H2O = (S)-malate + CoA + H(+). It catalyses the reaction propanoyl-CoA + glyoxylate + H2O = 3-methylmalate + CoA + H(+). It carries out the reaction (3S)-citramalyl-CoA = pyruvate + acetyl-CoA. The catalysed reaction is (S)-malyl-CoA + H2O = (S)-malate + CoA + H(+). Functionally, mitochondrial citramalyl-CoA lyase indirectly involved in the vitamin B12 metabolism. Converts citramalyl-CoA into acetyl-CoA and pyruvate in the C5-dicarboxylate catabolism pathway. The C5-dicarboxylate catabolism pathway is required to detoxify itaconate, a vitamin B12-poisoning metabolite. Also acts as a malate synthase in vitro, converting glyoxylate and acetyl-CoA to malate. Also displays malyl-CoA thioesterase activity. Also acts as a beta-methylmalate synthase in vitro, by mediating conversion of glyoxylate and propionyl-CoA to beta-methylmalate. Also has very weak citramalate synthase activity in vitro. This Mus musculus (Mouse) protein is Citramalyl-CoA lyase, mitochondrial.